Here is a 734-residue protein sequence, read N- to C-terminus: MKKPLNSAEEKKTGDITKAEIEAIKSGLHSNPFQIIPLHETPEGFSARCFIPGAEEVSVLTLDGNFVGELKQIDPDGFFEGRIDLSKRQPVRYRACRDDAEWAVTDPYSFGPVLGPMDDYFVREGSICGYSTGWARIPLKLEGVEGFHFAVWAPNGRRVSVVGDFNNWDGRRHVMRFRKDTGIWEIFAPDVYACAYKFEILGANGELLPLKADPYARRGELRPKNASVTAPELTQKWEDQAHREHWAQVDQRRQPISIYEVHAGSWQRSEDGTFLSWDELEAQLIPYCTDMGFTHIEFLPITEHPYDPSWGYQTTGLYAPTARFGDPEGFARFVNGAHKVGIGVLLDWVPAHFPTDEHGLRWFDGTALYEHADPRQGFHPDWNTAIYNFGRIEVMSYLINNALYWAEKFHLDGLRVDAVASMLYLDYSRKEGEWIPNEYGGRENLESVRFLQKMNSLVYGTHPGVMTIAEESTSWPKVSQPVHEGGLGFGFKWNMGFMHDTLSYFSREPVHRKFHHQELTFGLLYAFTENFVLPLSHDEVVHGKGSLIAKMSGDDWQKFANLRSYYGFMWGYPGKKLLFMGQEFAQWSEWSEKGSLDWNLRQYPMHEGMRRLVRDLNLTYRSKAALHARDCEPDGFRWLVVDDHENSVFAWLRTAPGEKPVAVICNLTPVYRENYYVPLGVAGRWREILNTDAEIYGGSGKGNGGRVQAVDAGGEIGAMLVLPPLATIMLEPEN.

D417 acts as the Nucleophile in catalysis. The active-site Proton donor is E470.

Belongs to the glycosyl hydrolase 13 family. GlgB subfamily. In terms of assembly, monomer.

It carries out the reaction Transfers a segment of a (1-&gt;4)-alpha-D-glucan chain to a primary hydroxy group in a similar glucan chain.. It functions in the pathway glycan biosynthesis; glycogen biosynthesis. Its function is as follows. Catalyzes the formation of the alpha-1,6-glucosidic linkages in glycogen by scission of a 1,4-alpha-linked oligosaccharide from growing alpha-1,4-glucan chains and the subsequent attachment of the oligosaccharide to the alpha-1,6 position. This is 1,4-alpha-glucan branching enzyme GlgB (glgB) from Rhizobium radiobacter (Agrobacterium tumefaciens).